Reading from the N-terminus, the 390-residue chain is Altered inheritance of mitochondria protein 6 (390 aa).

The first 26 residues, 1-26, serve as a signal peptide directing secretion; that stretch reads MLGLKGCLTILIGYVIAVCALFSSRG.

Belongs to the AIM6 family.

In Saccharomyces cerevisiae (strain RM11-1a) (Baker's yeast), this protein is Altered inheritance of mitochondria protein 6 (AIM6).